We begin with the raw amino-acid sequence, 470 residues long: BTB/POZ domain-containing protein 17 (470 aa).

A signal peptide spans 1–18 (MRMKGLYVVPLLLALVES). The region spanning 53–122 (SDTTLRIRTA…FYCGEISVNL (70 aa)) is the BTB domain. The region spanning 161 to 261 (VVSWYHYALR…ITPSQLFQIQ (101 aa)) is the BACK domain.

Its subcellular location is the secreted. In Xenopus laevis (African clawed frog), this protein is BTB/POZ domain-containing protein 17 (btbd17).